A 129-amino-acid chain; its full sequence is Large ribosomal subunit protein bL19 (129 aa).

The protein belongs to the bacterial ribosomal protein bL19 family.

Its function is as follows. This protein is located at the 30S-50S ribosomal subunit interface and may play a role in the structure and function of the aminoacyl-tRNA binding site. The sequence is that of Large ribosomal subunit protein bL19 from Bordetella avium (strain 197N).